Consider the following 63-residue polypeptide: High-potential iron-sulfur protein (63 aa).

Residues Cys-23, Cys-26, Cys-41, and Cys-56 each contribute to the [4Fe-4S] cluster site.

Belongs to the high-potential iron-sulfur protein (HiPIP) family. As to quaternary structure, homodimer.

Functionally, specific class of high-redox-potential 4Fe-4S ferredoxins. Functions in anaerobic electron transport in most purple and in some other photosynthetic bacteria and in at least one genus (Paracoccus) of halophilic, denitrifying bacteria. In Rhodocyclus tenuis (Rhodospirillum tenue), this protein is High-potential iron-sulfur protein (hip).